The primary structure comprises 699 residues: Elongation factor G 1 (699 aa).

The 283-residue stretch at 8-290 (ERYRNIGICA…AVIEYLPSPT (283 aa)) folds into the tr-type G domain. Residues 17–24 (AHVDAGKT), 88–92 (DTPGH), and 142–145 (NKMD) each bind GTP.

Belongs to the TRAFAC class translation factor GTPase superfamily. Classic translation factor GTPase family. EF-G/EF-2 subfamily.

The protein resides in the cytoplasm. Its function is as follows. Catalyzes the GTP-dependent ribosomal translocation step during translation elongation. During this step, the ribosome changes from the pre-translocational (PRE) to the post-translocational (POST) state as the newly formed A-site-bound peptidyl-tRNA and P-site-bound deacylated tRNA move to the P and E sites, respectively. Catalyzes the coordinated movement of the two tRNA molecules, the mRNA and conformational changes in the ribosome. The sequence is that of Elongation factor G 1 from Hahella chejuensis (strain KCTC 2396).